We begin with the raw amino-acid sequence, 1668 residues long: Probable histone acetyltransferase HAC-like 1 (1668 aa).

Disordered stretches follow at residues 1–34, 459–493, and 528–551; these read MNVGQAAHLSGQMSGQAPQTNQVGGSGVGGADGL, QQQPNSQHQQSILRSNSLKQPQLSSSHSMQLSEQG, and KGGQVFGHLSSSQNFHSNASHDSQ. Polar residues predominate over residues 11-23; the sequence is GQMSGQAPQTNQV. A compositionally biased stretch (low complexity) spans 459-469; that stretch reads QQQPNSQHQQS. Polar residues-rich tracts occupy residues 470 to 491 and 536 to 551; these read ILRSNSLKQPQLSSSHSMQLSE and LSSSQNFHSNASHDSQ. The segment at 651-732 adopts a TAZ-type 1 zinc-finger fold; sequence AAGNIYYFRQ…DLQCPVCSNA (82 aa). The segment covering 886–899 has biased composition (basic and acidic residues); sequence KETSETAPEVKNEA. Positions 886–912 are disordered; it reads KETSETAPEVKNEANDSTDITVSKSGK. Residues 900-909 show a composition bias toward polar residues; sequence NDSTDITVSK. The PHD-type zinc-finger motif lies at 1002–1079; the sequence is HFFCIPCYNE…EYTCPNCYVE (78 aa). The 437-residue stretch at 1094–1530 folds into the CBP/p300-type HAT domain; sequence VLGAKDLPRT…VLYHLHNPTA (437 aa). Residues 1217–1219, 1236–1237, and W1292 contribute to the acetyl-CoA site; these read LDS and RT. The stretch at 1342–1365 forms a coiled coil; it reads GAAEDMINQLRQEEDDRKQQKKGK. A ZZ-type zinc finger spans residues 1412-1475; it reads HLQYSCSHCC…TLHPVDIVGL (64 aa). Positions 1417, 1420, 1432, 1435, 1441, 1444, 1457, and 1465 each coordinate Zn(2+). The TAZ-type 2 zinc finger occupies 1553–1634; it reads EVCPDFDLRK…GCNVPRCRDL (82 aa). Positions 1630–1650 form a coiled coil; it reads RCRDLKEHLRRLQQQSDSRRR.

The protein resides in the nucleus. It carries out the reaction L-lysyl-[protein] + acetyl-CoA = N(6)-acetyl-L-lysyl-[protein] + CoA + H(+). Acetyltransferase enzyme. Acetylates histones, giving a specific tag for transcriptional activation. The protein is Probable histone acetyltransferase HAC-like 1 of Oryza sativa subsp. japonica (Rice).